The following is a 237-amino-acid chain: Purine nucleoside phosphorylase DeoD-type (237 aa).

Histidine 4 serves as a coordination point for a purine D-ribonucleoside. Phosphate is bound by residues glycine 20, arginine 24, arginine 43, and 87–90 (RVGT). Residues 180-182 (EME) and 204-205 (SD) contribute to the a purine D-ribonucleoside site. The Proton donor role is filled by aspartate 205.

Belongs to the PNP/UDP phosphorylase family. As to quaternary structure, homohexamer; trimer of homodimers.

It carries out the reaction a purine D-ribonucleoside + phosphate = a purine nucleobase + alpha-D-ribose 1-phosphate. The enzyme catalyses a purine 2'-deoxy-D-ribonucleoside + phosphate = a purine nucleobase + 2-deoxy-alpha-D-ribose 1-phosphate. Its function is as follows. Catalyzes the reversible phosphorolytic breakdown of the N-glycosidic bond in the beta-(deoxy)ribonucleoside molecules, with the formation of the corresponding free purine bases and pentose-1-phosphate. The polypeptide is Purine nucleoside phosphorylase DeoD-type (Streptococcus suis (strain 98HAH33)).